The following is a 371-amino-acid chain: 4-hydroxy-3-methylbut-2-en-1-yl diphosphate synthase (flavodoxin) (371 aa).

Positions 270, 273, 305, and 312 each coordinate [4Fe-4S] cluster.

This sequence belongs to the IspG family. The cofactor is [4Fe-4S] cluster.

It catalyses the reaction (2E)-4-hydroxy-3-methylbut-2-enyl diphosphate + oxidized [flavodoxin] + H2O + 2 H(+) = 2-C-methyl-D-erythritol 2,4-cyclic diphosphate + reduced [flavodoxin]. Its pathway is isoprenoid biosynthesis; isopentenyl diphosphate biosynthesis via DXP pathway; isopentenyl diphosphate from 1-deoxy-D-xylulose 5-phosphate: step 5/6. In terms of biological role, converts 2C-methyl-D-erythritol 2,4-cyclodiphosphate (ME-2,4cPP) into 1-hydroxy-2-methyl-2-(E)-butenyl 4-diphosphate. This is 4-hydroxy-3-methylbut-2-en-1-yl diphosphate synthase (flavodoxin) from Shewanella denitrificans (strain OS217 / ATCC BAA-1090 / DSM 15013).